A 184-amino-acid chain; its full sequence is Protein PPLZ12 (184 aa).

The polypeptide is Protein PPLZ12 (PPLZ12) (Lupinus polyphyllus (Large-leaved lupine)).